Here is a 214-residue protein sequence, read N- to C-terminus: tRNA (guanine-N(7)-)-methyltransferase (214 aa).

Glu-44, Glu-69, Asp-96, and Asp-118 together coordinate S-adenosyl-L-methionine. Asp-118 is an active-site residue. Substrate contacts are provided by residues Lys-122, Asp-154, and 191 to 194 (TEYE).

The protein belongs to the class I-like SAM-binding methyltransferase superfamily. TrmB family.

It catalyses the reaction guanosine(46) in tRNA + S-adenosyl-L-methionine = N(7)-methylguanosine(46) in tRNA + S-adenosyl-L-homocysteine. Its pathway is tRNA modification; N(7)-methylguanine-tRNA biosynthesis. In terms of biological role, catalyzes the formation of N(7)-methylguanine at position 46 (m7G46) in tRNA. The sequence is that of tRNA (guanine-N(7)-)-methyltransferase from Listeria monocytogenes serotype 4a (strain HCC23).